The sequence spans 1298 residues: Phosphoribosylformylglycinamidine synthase (1298 aa).

The interval 303–327 (FPGAATGSGGEIRDEGATGRGAKPK) is disordered. ATP-binding positions include 305-316 (GAATGSGGEIRD), 384-386 (TGY), and A676. The Mg(2+) site is built by D677, E716, N720, and D884. ATP is bound at residue S886. The 254-residue stretch at 1045-1298 (VAVLREQGVN…MFRNARAWVN (254 aa)) folds into the Glutamine amidotransferase type-1 domain. C1138 functions as the Nucleophile in the catalytic mechanism. Active-site residues include H1263 and E1265.

It in the N-terminal section; belongs to the FGAMS family. In terms of assembly, monomer.

The protein resides in the cytoplasm. The catalysed reaction is N(2)-formyl-N(1)-(5-phospho-beta-D-ribosyl)glycinamide + L-glutamine + ATP + H2O = 2-formamido-N(1)-(5-O-phospho-beta-D-ribosyl)acetamidine + L-glutamate + ADP + phosphate + H(+). It participates in purine metabolism; IMP biosynthesis via de novo pathway; 5-amino-1-(5-phospho-D-ribosyl)imidazole from N(2)-formyl-N(1)-(5-phospho-D-ribosyl)glycinamide: step 1/2. Its function is as follows. Phosphoribosylformylglycinamidine synthase involved in the purines biosynthetic pathway. Catalyzes the ATP-dependent conversion of formylglycinamide ribonucleotide (FGAR) and glutamine to yield formylglycinamidine ribonucleotide (FGAM) and glutamate. The chain is Phosphoribosylformylglycinamidine synthase from Pseudomonas syringae pv. syringae (strain B728a).